Reading from the N-terminus, the 508-residue chain is Protein O-glucosyltransferase 3 (508 aa).

A signal peptide spans 1 to 24 (MLGVRRALLLPPLQLALLVAAGTG). A Filamin repeat occupies 25-134 (ARVSAPRSLA…VAQSPYILKG (110 aa)). N-linked (GlcNAc...) asparagine glycosylation occurs at N307. The disordered stretch occupies residues 480 to 508 (RDGMERVPQPDDSTSVRQCHRKRPEREEL). Positions 505–508 (REEL) match the Prevents secretion from ER motif.

It belongs to the KDELC family.

The protein localises to the endoplasmic reticulum lumen. It catalyses the reaction L-seryl-[EGF-like domain protein] + UDP-alpha-D-glucose = 3-O-(beta-D-glucosyl)-L-seryl-[EGF-like domain protein] + UDP + H(+). It carries out the reaction L-seryl-[EGF-like domain protein] + UDP-alpha-D-xylose = 3-O-(beta-D-xylosyl)-L-seryl-[EGF-like domain protein] + UDP + H(+). It functions in the pathway protein modification; protein glycosylation. In terms of biological role, protein glucosyltransferase that catalyzes the transfer of glucose from UDP-glucose to a serine residue within the consensus sequence peptide C-X-N-T-X-G-S-F-X-C. Can also catalyze the transfer of xylose from UDP-xylose but less efficiently. Specifically targets extracellular EGF repeats of proteins such as NOTCH1, NOTCH3, FBN1, FBN2 and LTBP1. May regulate the transport of NOTCH1 and NOTCH3 to the plasma membrane and thereby the Notch signaling pathway. This is Protein O-glucosyltransferase 3 (Poglut3) from Rattus norvegicus (Rat).